A 210-amino-acid chain; its full sequence is Tetraspanin-31 (210 aa).

The Cytoplasmic portion of the chain corresponds to 1-12; it reads MVCGGFACSRNA. Residues 13 to 33 traverse the membrane as a helical segment; the sequence is LCALNVVYMLVGFLLIGVAAW. Residues 34 to 44 lie on the Extracellular side of the membrane; the sequence is GKGLGVVSSIH. The helical transmembrane segment at 45-65 threads the bilayer; it reads IIGGVIAVGVFLLLIAVAGLV. Residues 66-72 lie on the Cytoplasmic side of the membrane; that stretch reads GAANHHQ. Residues 73-93 form a helical membrane-spanning segment; it reads VLLFFYMIILGLVFIFQFGIS. Residues 94-173 lie on the Extracellular side of the membrane; the sequence is CSCLAINRNT…FLKHSDKALK (80 aa). 3 N-linked (GlcNAc...) asparagine glycosylation sites follow: Asn109, Asn117, and Asn134. The helical transmembrane segment at 174–194 threads the bilayer; sequence ILGGVGLFFSFTEILGVWLAM. The Cytoplasmic segment spans residues 195–210; sequence RFRNQKDPRANPSAFL.

It belongs to the tetraspanin (TM4SF) family.

The protein resides in the membrane. The protein is Tetraspanin-31 (Tspan31) of Mus musculus (Mouse).